Reading from the N-terminus, the 114-residue chain is Small ribosomal subunit protein uS17 (114 aa).

It belongs to the universal ribosomal protein uS17 family. Part of the 30S ribosomal subunit.

One of the primary rRNA binding proteins, it binds specifically to the 5'-end of 16S ribosomal RNA. This Saccharolobus solfataricus (strain ATCC 35092 / DSM 1617 / JCM 11322 / P2) (Sulfolobus solfataricus) protein is Small ribosomal subunit protein uS17.